The primary structure comprises 114 residues: uncharacterized protein (114 aa).

This is an uncharacterized protein from Schizosaccharomyces pombe (strain 972 / ATCC 24843) (Fission yeast).